A 352-amino-acid chain; its full sequence is Ion-translocating oxidoreductase complex subunit D (352 aa).

5 helical membrane passes run isoleucine 20 to glycine 40, glycine 42 to leucine 62, alanine 78 to alanine 109, proline 123 to leucine 143, and isoleucine 148 to alanine 168. Position 187 is an FMN phosphoryl threonine (threonine 187). Helical transmembrane passes span isoleucine 214–leucine 234, tryptophan 242–phenylalanine 262, leucine 267–leucine 287, leucine 301–proline 321, and aspartate 322–threonine 342.

This sequence belongs to the NqrB/RnfD family. In terms of assembly, the complex is composed of six subunits: RsxA, RsxB, RsxC, RsxD, RsxE and RsxG. The cofactor is FMN.

Its subcellular location is the cell inner membrane. Functionally, part of a membrane-bound complex that couples electron transfer with translocation of ions across the membrane. Required to maintain the reduced state of SoxR. This chain is Ion-translocating oxidoreductase complex subunit D, found in Escherichia coli O139:H28 (strain E24377A / ETEC).